We begin with the raw amino-acid sequence, 417 residues long: Serine/threonine transporter SstT (417 aa).

8 consecutive transmembrane segments (helical) span residues 21 to 41 (ILAG…VAKM), 49 to 69 (FISA…MASI), 83 to 103 (ILVL…VASF), 142 to 162 (ALIN…GLAL), 193 to 213 (IGIF…ALAG), 218 to 238 (LLVL…LIVF), 291 to 311 (IPLG…ILTL), and 331 to 351 (LVAA…LLLI).

Belongs to the dicarboxylate/amino acid:cation symporter (DAACS) (TC 2.A.23) family.

The protein localises to the cell inner membrane. It carries out the reaction L-serine(in) + Na(+)(in) = L-serine(out) + Na(+)(out). The catalysed reaction is L-threonine(in) + Na(+)(in) = L-threonine(out) + Na(+)(out). Involved in the import of serine and threonine into the cell, with the concomitant import of sodium (symport system). This is Serine/threonine transporter SstT from Proteus mirabilis (strain HI4320).